A 517-amino-acid chain; its full sequence is Quinol oxidase subunit 1 (517 aa).

12 helical membrane-spanning segments follow: residues Val-19–Met-39, Ile-64–Phe-84, Gln-98–Pro-118, Met-150–Ile-170, Ile-185–Ala-205, Trp-226–Phe-246, Ile-271–Leu-291, Thr-303–Thr-323, Val-333–Val-353, Val-369–Phe-389, Ile-412–Gly-432, and Ile-460–Ala-480. Fe(II)-heme a is bound at residue His-65. Cu cation is bound by residues His-235, Tyr-239, His-284, and His-285. A cross-link (1'-histidyl-3'-tyrosine (His-Tyr)) is located at residues His-235–Tyr-239. His-372 lines the heme a3 pocket. His-374 contacts Fe(II)-heme a.

It belongs to the heme-copper respiratory oxidase family.

Its subcellular location is the cell membrane. The enzyme catalyses 2 a quinol + O2 = 2 a quinone + 2 H2O. Functionally, catalyzes the reduction of oxygen to water. Subunits I, II and III form the functional core of the enzyme complex. Electrons originating in caldariella quinol are transferred to the binuclear center formed by heme A3 and Cu(B). Its function is as follows. Subunit I binds heme a and the bimetallic center. The protein is Quinol oxidase subunit 1 (soxB) of Sulfolobus acidocaldarius (strain ATCC 33909 / DSM 639 / JCM 8929 / NBRC 15157 / NCIMB 11770).